We begin with the raw amino-acid sequence, 197 residues long: MRKKRSAPQKPKLTYRVNEQIRVPEVRVVFKDGSQEILKTGEARKMAEQEGLDLIEVQPTAQPPVCKMDNYGKLQYKLDKNEKDRKKKSKPTELKELRFHPNTDTHDFDFKSAHLEEFLRKGNRVRATIVFLGRSIIYKDKGFELVERLKERLSNVSNPEGEAKFEGKRLFIYFEPDKKKIEIFERQLAKMKPEEKP.

This sequence belongs to the IF-3 family. Monomer.

It is found in the cytoplasm. Functionally, IF-3 binds to the 30S ribosomal subunit and shifts the equilibrium between 70S ribosomes and their 50S and 30S subunits in favor of the free subunits, thus enhancing the availability of 30S subunits on which protein synthesis initiation begins. The chain is Translation initiation factor IF-3 from Prosthecochloris aestuarii (strain DSM 271 / SK 413).